A 789-amino-acid polypeptide reads, in one-letter code: Protein translocase subunit SecA 2 (789 aa).

ATP is bound by residues glutamine 79, glycine 97–threonine 101, and aspartate 487.

Belongs to the SecA family. Monomer and homodimer. Part of the essential Sec protein translocation apparatus which comprises SecA, SecYEG and auxiliary proteins SecDF. Other proteins may also be involved.

Its subcellular location is the cell membrane. It localises to the cytoplasm. It catalyses the reaction ATP + H2O + cellular proteinSide 1 = ADP + phosphate + cellular proteinSide 2.. Functionally, part of the Sec protein translocase complex. Interacts with the SecYEG preprotein conducting channel. Has a central role in coupling the hydrolysis of ATP to the transfer of proteins into and across the cell membrane, serving as an ATP-driven molecular motor driving the stepwise translocation of polypeptide chains across the membrane. In Pediococcus pentosaceus (strain ATCC 25745 / CCUG 21536 / LMG 10740 / 183-1w), this protein is Protein translocase subunit SecA 2.